We begin with the raw amino-acid sequence, 615 residues long: Erythritol-mannosyl-transferase 1 (615 aa).

The segment at 366–387 is disordered; the sequence is RTPNNTGASTPTAPISSPDFEE. A compositionally biased stretch (polar residues) spans 367–380; it reads TPNNTGASTPTAPI.

The protein belongs to the UDP-glycosyltransferase family.

It localises to the vacuole membrane. Its pathway is secondary metabolite biosynthesis. Functionally, erythritol-mannosyl-transferase; part of the gene cluster that mediates the biosynthesis of mannosylerythritol lipids (MELs), surface-active substances that enhance the availability of water-insoluble substrates. Mannosylerythritol lipid production is responsible for hemolytic activity of Ustilago maydis. Depending on the number of acetyl groups, mannosylerythritol lipids can be differentiated into MEL A (fully acetylated), MEL B and MEL C (monoacetylated at R-6 and R-4, respectively), and the fully deacetylated MEL D. The first step in the pathway is the generation of mannosylerythritol by the glycosyltransferase EMT1 which catalyzes the transfer of GDP-mannose to the C-4 atom of meso-erythritol. This reaction has to be stereospecific, since only mannosyl-D-erythritol is generated. The produced disaccharide is subsequently acylated with fatty acids of various lengths derived from the peroxisomal beta-oxidation by the peroxisomal acyltransferases MAC1 and MAC2 at positions C-2 and C-3, repectively. The existence of MEL derivatives which carry an acetyl group at C-2 implies that at least MAC1 also accepts acetyl-CoA as a donor. The final step of MEL biosynthesis is the acetylation of the fully acylated mannosylerythritol lipids catalyzed by the acetyl-CoA-dependent acetyltransferase MAT1. MAT1 displays a relaxed regioselectivity and is able to transfer acetylgroups to both positions C-4 and C-6 of the mannosyl moiety. This chain is Erythritol-mannosyl-transferase 1, found in Mycosarcoma maydis (Corn smut fungus).